A 315-amino-acid chain; its full sequence is L-lactate dehydrogenase (315 aa).

NAD(+) contacts are provided by Val14, Asp35, and Tyr66. Substrate is bound by residues Gln83, Arg89, and 121–124 (NPVD). Residues 119–121 (VAN) and Ser144 contribute to the NAD(+) site. 149-152 (DTAR) provides a ligand contact to substrate. The active-site Proton acceptor is His176. Tyr221 bears the Phosphotyrosine mark. A substrate-binding site is contributed by Thr230.

The protein belongs to the LDH/MDH superfamily. LDH family. Homotetramer.

The protein resides in the cytoplasm. The catalysed reaction is (S)-lactate + NAD(+) = pyruvate + NADH + H(+). It participates in fermentation; pyruvate fermentation to lactate; (S)-lactate from pyruvate: step 1/1. Its function is as follows. Catalyzes the conversion of lactate to pyruvate. The sequence is that of L-lactate dehydrogenase from Mesomycoplasma hyopneumoniae (strain 232) (Mycoplasma hyopneumoniae).